The primary structure comprises 621 residues: Acetolactate synthase (621 aa).

The segment covering 1–19 (MSAPTRRPAPDAPGAAGIA) has biased composition (low complexity). Residues 1 to 39 (MSAPTRRPAPDAPGAAGIAPAPPAPAAKPAAGKPKRIGP) form a disordered region. Glu-89 serves as a coordination point for thiamine diphosphate. Residues Arg-190, 296–317 (HGTVAAVAALQRSDLLIALGTR), and 339–358 (DIDPAEIGKNRHADVPIVGD) each bind FAD. Positions 432–512 (HDQMWAAQFI…IKVALINNGN (81 aa)) are thiamine pyrophosphate binding. Mg(2+)-binding residues include Asp-483 and Asn-510.

It belongs to the TPP enzyme family. It depends on Mg(2+) as a cofactor. Thiamine diphosphate is required as a cofactor.

The enzyme catalyses 2 pyruvate + H(+) = (2S)-2-acetolactate + CO2. The protein operates within amino-acid biosynthesis; L-isoleucine biosynthesis; L-isoleucine from 2-oxobutanoate: step 1/4. Its pathway is amino-acid biosynthesis; L-valine biosynthesis; L-valine from pyruvate: step 1/4. This chain is Acetolactate synthase (ilvB), found in Mycobacterium avium.